Here is a 213-residue protein sequence, read N- to C-terminus: GTP-binding protein YPTC4 (213 aa).

Residue 13 to 21 (GDTGVGKSC) participates in GTP binding. Residues 35–43 (HDLTIGVEF) carry the Effector region motif. GTP is bound by residues 61 to 65 (DTAGQ), 119 to 122 (NKCD), and 149 to 151 (SAR). Residues 194–213 (AGPQTVKPGEGGAAKSSSCC) form a disordered region. 2 S-geranylgeranyl cysteine lipidation sites follow: cysteine 212 and cysteine 213.

This sequence belongs to the small GTPase superfamily. Rab family.

The protein resides in the cell membrane. Functionally, protein transport. Probably involved in vesicular traffic. This chain is GTP-binding protein YPTC4 (YPTC4), found in Chlamydomonas reinhardtii (Chlamydomonas smithii).